A 298-amino-acid polypeptide reads, in one-letter code: Probable endonuclease 4 (298 aa).

Positions 69, 111, 146, 180, 183, 215, 228, 230, and 260 each coordinate Zn(2+).

Belongs to the AP endonuclease 2 family. The cofactor is Zn(2+).

It carries out the reaction Endonucleolytic cleavage to 5'-phosphooligonucleotide end-products.. Endonuclease IV plays a role in DNA repair. It cleaves phosphodiester bonds at apurinic or apyrimidinic (AP) sites, generating a 3'-hydroxyl group and a 5'-terminal sugar phosphate. The protein is Probable endonuclease 4 of Bacillus cereus (strain 03BB102).